Reading from the N-terminus, the 476-residue chain is MNSAVEAELAELGIEGYLSQHQHKSMLRFLTCGSVDDGKSTLIGRLLHDTKQIYEDQLAAVHSDSQRVGTTGEKPDLALLVDGLQAEREQGITIDVAYRYFSTQKRKFIIADTPGHEQYTRNMATGASTCDLAVILIDARKGVLDQTRRHSFISNLLGLKHFIVAVNKMDLVDYSQDRFEEIRDQYLEFAENLEGETNIQILPVSALEGINVAAPSKELAWFEGPSLLEVLENVDIDQKRSAGEFRFPVQYVNRPNLDFRGFAGTVASGRVSVGDEIKALPSGKTSKVARIVTFDGDLESAQAGLAVTLTLEDEIDISRGDLIVLENAQIESTNHVLADIVWMTEQPLQPGKAYDIKIAGKKTVGQVETVRHQYDINNLSTHAVDELPLNGIGLCEWSLNETVALDKYRESADTGGFIVIDRLTNVTVGAGLIRDRLDSVEQQVGNFSAFELEFNALVRKHFPHWDAKDLSQLLKS.

One can recognise a tr-type G domain in the interval 24 to 239; sequence KSMLRFLTCG…VLENVDIDQK (216 aa). Positions 33–40 are G1; that stretch reads GSVDDGKS. GTP is bound at residue 33-40; it reads GSVDDGKS. The tract at residues 91–95 is G2; it reads GITID. The tract at residues 112-115 is G3; it reads DTPG. GTP contacts are provided by residues 112–116 and 167–170; these read DTPGH and NKMD. The interval 167-170 is G4; it reads NKMD. The segment at 205–207 is G5; the sequence is SAL.

Belongs to the TRAFAC class translation factor GTPase superfamily. Classic translation factor GTPase family. CysN/NodQ subfamily. In terms of assembly, heterodimer composed of CysD, the smaller subunit, and CysN.

The catalysed reaction is sulfate + ATP + H(+) = adenosine 5'-phosphosulfate + diphosphate. It participates in sulfur metabolism; hydrogen sulfide biosynthesis; sulfite from sulfate: step 1/3. In terms of biological role, with CysD forms the ATP sulfurylase (ATPS) that catalyzes the adenylation of sulfate producing adenosine 5'-phosphosulfate (APS) and diphosphate, the first enzymatic step in sulfur assimilation pathway. APS synthesis involves the formation of a high-energy phosphoric-sulfuric acid anhydride bond driven by GTP hydrolysis by CysN coupled to ATP hydrolysis by CysD. The chain is Sulfate adenylyltransferase subunit 1 from Vibrio atlanticus (strain LGP32) (Vibrio splendidus (strain Mel32)).